Consider the following 490-residue polypeptide: Ribulose bisphosphate carboxylase large chain (490 aa).

Asparagine 127 and threonine 177 together coordinate substrate. Lysine 179 serves as the catalytic Proton acceptor. Lysine 181 lines the substrate pocket. Mg(2+) contacts are provided by lysine 205, aspartate 207, and glutamate 208. At lysine 205 the chain carries N6-carboxylysine. Histidine 297 acts as the Proton acceptor in catalysis. Substrate-binding residues include arginine 298, histidine 330, and serine 382.

This sequence belongs to the RuBisCO large chain family. Type I subfamily. In terms of assembly, heterohexadecamer of 8 large chains and 8 small chains. It depends on Mg(2+) as a cofactor.

The protein resides in the plastid. It localises to the chloroplast. It carries out the reaction 2 (2R)-3-phosphoglycerate + 2 H(+) = D-ribulose 1,5-bisphosphate + CO2 + H2O. The enzyme catalyses D-ribulose 1,5-bisphosphate + O2 = 2-phosphoglycolate + (2R)-3-phosphoglycerate + 2 H(+). Functionally, ruBisCO catalyzes two reactions: the carboxylation of D-ribulose 1,5-bisphosphate, the primary event in carbon dioxide fixation, as well as the oxidative fragmentation of the pentose substrate in the photorespiration process. Both reactions occur simultaneously and in competition at the same active site. This is Ribulose bisphosphate carboxylase large chain from Trieres chinensis (Marine centric diatom).